The following is a 496-amino-acid chain: Solute carrier family 2, facilitated glucose transporter member 3 (496 aa).

Residues 1–10 (MGTQKVTPAL) are Cytoplasmic-facing. A helical transmembrane segment spans residues 11-32 (IFAITVATIGSFQFGYNTGVIN). The Extracellular portion of the chain corresponds to 33–64 (APEKIIKEFINKTLTDKGNAPPSEVLLTSLWS). N-linked (GlcNAc...) asparagine glycosylation occurs at Asn-43. Residues 65 to 85 (LSVAIFSVGGMIGSFSVGLFV) traverse the membrane as a helical segment. Topologically, residues 86–90 (NRFGR) are cytoplasmic. A helical transmembrane segment spans residues 91-111 (RNSMLIVNLLAVTGGCFMGLC). The Extracellular portion of the chain corresponds to 112 to 118 (KVAKSVE). A helical transmembrane segment spans residues 119–142 (MLILGRLIIGLFCGLCTGFVPMYI). Over 143 to 153 (GEISPTALRGA) the chain is Cytoplasmic. Residues 154–174 (FGTLNQLGIVVGILVAQIFGL) traverse the membrane as a helical segment. Position 159 (Gln-159) interacts with D-glucose. Residues 175 to 183 (EFILGSEEL) lie on the Extracellular side of the membrane. The chain crosses the membrane as a helical span at residues 184–204 (WPLLLGFTILPTILQSAALPF). The Cytoplasmic portion of the chain corresponds to 205 to 269 (CPESPRFLLI…LFRVSSYRQP (65 aa)). Thr-232 carries the post-translational modification Phosphothreonine. The chain crosses the membrane as a helical span at residues 270–290 (IIISIVLQLSQQLSGINAVFY). The tract at residues 277-279 (QLS) is important for selectivity against fructose. D-glucose-binding positions include 280–281 (QQ) and Asn-286. Residues 291–304 (YSTGIFKDAGVQEP) are Extracellular-facing. Residues 305–325 (IYATIGAGVVNTIFTVVSLFL) traverse the membrane as a helical segment. Asn-315 serves as a coordination point for D-glucose. Topologically, residues 326 to 331 (VERAGR) are cytoplasmic. Residues 332–352 (RTLHMIGLGGMAFCSTLMTVS) traverse the membrane as a helical segment. Over 353 to 363 (LLLKDNYNGMS) the chain is Extracellular. A helical transmembrane segment spans residues 364 to 389 (FVCIGAILVFVAFFEIGPGPIPWFIV). The D-glucose site is built by Glu-378 and Trp-386. Residues 390-399 (AELFSQGPRP) lie on the Cytoplasmic side of the membrane. A helical membrane pass occupies residues 400 to 420 (AAMAVAGCSNWTSNFLVGLLF). The Extracellular segment spans residues 421-429 (PSAAHYLGA). The chain crosses the membrane as a helical span at residues 430-450 (YVFIIFTGFLITFLAFTFFKV). Over 451-496 (PETRGRTFEDITRAFEGQAHGADRSGKDGVMEVNSIEPAKETTTNV) the chain is Cytoplasmic. Residues Ser-475 and Ser-485 each carry the phosphoserine modification. Thr-492 bears the Phosphothreonine mark.

Belongs to the major facilitator superfamily. Sugar transporter (TC 2.A.1.1) family. Glucose transporter subfamily. Interacts with SMIM43; the interaction may promote SLC2A3-mediated glucose transport to meet the energy needs of mesendoderm differentiation.

It is found in the cell membrane. The protein resides in the perikaryon. It localises to the cell projection. It catalyses the reaction D-glucose(out) = D-glucose(in). It carries out the reaction D-galactose(in) = D-galactose(out). With respect to regulation, deoxyglucose transport is inhibited by D-glucose, D-galactose and maltose. Galactose transport is inhibited by D-glucose and maltose. In terms of biological role, facilitative glucose transporter. Can also mediate the uptake of various other monosaccharides across the cell membrane. Mediates the uptake of glucose, 2-deoxyglucose, galactose, mannose, xylose and fucose, and probably also dehydroascorbate. Does not mediate fructose transport. Required for mesendoderm differentiation. The polypeptide is Solute carrier family 2, facilitated glucose transporter member 3 (Pongo abelii (Sumatran orangutan)).